The primary structure comprises 950 residues: UPF0182 protein P9303_14611 (950 aa).

The next 9 membrane-spanning stretches (helical) occupy residues 20–40 (LLLS…WLWF), 53–73 (WLWQ…CQLW), 102–122 (LLGC…LAWL), 141–161 (IWAL…MLGN), 173–193 (CFCF…ALAI), 209–229 (FGLG…AQLV), 259–279 (CDVM…LLWL), 308–328 (SLAS…PWIQ), and 335–355 (LIAS…APFV).

Belongs to the UPF0182 family.

The protein localises to the cell membrane. The protein is UPF0182 protein P9303_14611 of Prochlorococcus marinus (strain MIT 9303).